A 296-amino-acid chain; its full sequence is tRNA U34 carboxymethyltransferase (296 aa).

Residues Lys-64, Trp-78, Lys-83, Gly-102, 124–126 (DPS), 151–152 (VE), Tyr-171, and Arg-286 each bind carboxy-S-adenosyl-L-methionine.

It belongs to the class I-like SAM-binding methyltransferase superfamily. CmoB family. Homotetramer.

The catalysed reaction is carboxy-S-adenosyl-L-methionine + 5-hydroxyuridine(34) in tRNA = 5-carboxymethoxyuridine(34) in tRNA + S-adenosyl-L-homocysteine + H(+). In terms of biological role, catalyzes carboxymethyl transfer from carboxy-S-adenosyl-L-methionine (Cx-SAM) to 5-hydroxyuridine (ho5U) to form 5-carboxymethoxyuridine (cmo5U) at position 34 in tRNAs. In Sulfurimonas denitrificans (strain ATCC 33889 / DSM 1251) (Thiomicrospira denitrificans (strain ATCC 33889 / DSM 1251)), this protein is tRNA U34 carboxymethyltransferase.